Consider the following 1040-residue polypeptide: Neprilysin-4 (1040 aa).

The disordered stretch occupies residues 1 to 27 (MSRHSQLKLAMPSVHGAPATAPGSPMN). The segment at 1 to 45 (MSRHSQLKLAMPSVHGAPATAPGSPMNAKARSVKLGLGVNQRTGR) is required for maintaining muscle integrity. Residues 1 to 55 (MSRHSQLKLAMPSVHGAPATAPGSPMNAKARSVKLGLGVNQRTGRVQWCPGLTCC) are Cytoplasmic-facing. The helical; Signal-anchor for type II membrane protein transmembrane segment at 56–76 (KMLLLLPVVMLPLTLVLILIM) threads the bilayer. The Extracellular segment spans residues 77-1040 (RLDGMLAALQ…MNPQKKCSVW (964 aa)). In terms of domain architecture, Peptidase M13 spans 251-1040 (EEGTREGIRM…MNPQKKCSVW (790 aa)). 4 cysteine pairs are disulfide-bonded: Cys-277-Cys-1025, Cys-285-Cys-985, Cys-452-Cys-700, and Cys-909-Cys-1037. Asn-387, Asn-593, Asn-723, and Asn-819 each carry an N-linked (GlcNAc...) asparagine glycan. Residue His-872 coordinates Zn(2+). Glu-873 is an active-site residue. His-876 contacts Zn(2+). An N-linked (GlcNAc...) asparagine glycan is attached at Asn-916. Glu-934 provides a ligand contact to Zn(2+). The active-site Proton donor is Asp-938. Residue Asn-969 is glycosylated (N-linked (GlcNAc...) asparagine).

The protein belongs to the peptidase M13 family. Interacts (via intracellular domain) with the putative carbohydrate kinase CG3534. Requires Zn(2+) as cofactor. Expressed in the gonads and testes of adults, and the adult and larval brain (at protein level). In embryos, expressed in the pericardial, muscle founder and glia cells (at protein level). In stage 12 embryos, expressed in specific dorsal muscle founder cells such as DA1 and DO2, and also in the certain pericardial progenitor cells where expression persists throughout embryogenesis. Expressed in the glia cells of the embryonic, larval and adult central nervous system. Expressed in the somatic muscles of larvae, pupae and adults. Isoform A: Detected in the male abdomen (at protein level). Isoform B: Not detected in the male or female abdomen (at protein level).

The protein resides in the cell membrane. It localises to the sarcoplasmic reticulum. It is found in the cytoplasm. The catalysed reaction is Preferential cleavage of polypeptides between hydrophobic residues, particularly with Phe or Tyr at P1'.. In terms of biological role, metalloendoprotease which cleaves peptides at the amino side of hydrophobic residues - such as the hormones Akh and Dh31, and the neuropeptides Allatostatins (AST1, AST2, AST3 and AST4), Crz, Drosulfakinins (DSK-I and DSK-II), Lk, sNPF and the tachykinin peptides TK-1, TK-2, TK-4 and TK-5. Functions in female fertility, memory formation and may also act in regulating insulin signaling and food intake. Likely to be involved in controlling feeding behavior and the expression of insulin-like peptides by cleaving various regulatory peptides that include certain Drosulfakinins, Allatostatins and tachykinin peptides. Required in females for normal patterns of egg laying and hatching. Required in the dorsal paired medial neurons for the proper formation of long-term (LTM) and middle-term memories (MTM). Also required in the mushroom body neurons where it functions redundantly with neprilysins Nep2 and Nep3, in normal LTM formation. Functionally, cleaves angiotensin-1 and tachykinin neuropeptide substance P. Functions in maintaining muscle integrity, possibly independently of its endopeptidase activity. The protein is Neprilysin-4 of Drosophila melanogaster (Fruit fly).